A 516-amino-acid chain; its full sequence is MVTQVPSSTNILVIGGGPAGAYAAGVLVREGFEVTLLEKDFFPRYHIGESMLPSWRQFLRFIDMEEKMKNYGFLPKPGGAIKLNQDKREGYTDFIANNPENSAWNVVRSEFDQLLLNHVAEQGVKVYEGTRVDEIHFSPEEPTRPVSLTWSKDDKTRGDISFNWLVDASGRNGLMSTKYLKNRTFNRSLKNVAVWGYWTGTNRYAPGTNRENAPWFEALTDETGWVWFIPLHDGTTNVGVVLVEEDSKRKKAEYRAKHEGKSLAEVQYDRYMEDIQLAPGLIGLLGDGKFDGKLQAAGDYSYHASGYAGPHFRIAGDAGAFIDPFFSSGIHLAFTGGLSAACTIAASIRGHCTEEEASEFHSSKIKTAFTRFLFVVLGIYKQLRAQQSQILYEADEESLDRAILSLRPVIQGAADADADLTKEELENTLDFCKSVLEDEPQANGNGAAKQDAVPAPIPVALSSGAGPEKDAKRREIEAESLRSLQEMDDCKRNFGTEVINGFFVKMEQGVLGLVRA.

FAD is bound by residues Gly-16, Ala-19, and Glu-49. Residues Ser-328 and Gly-329 each coordinate chloride. Residue Ile-330 participates in FAD binding. Positions 440–475 (PQANGNGAAKQDAVPAPIPVALSSGAGPEKDAKRRE) are disordered.

It belongs to the flavin-dependent halogenase family.

It carries out the reaction melleolide F + FADH2 + chloride + O2 = 6'-chloromelleolide F + FAD + 2 H2O + H(+). Flavin-dependent halogenase involved in the biosynthesis of melleolides, a range of antifungal and phytotoxic polyketide derivatives composed of an orsellinic acid (OA) moiety esterified to various sesquiterpene alcohols. The halogenase catalyzes the transfer of a single chlorine atom to the melleolide backbone, resulting in a 6'-chloromelleolide product. The enzyme acts on free substrate and does not depend on carrier-protein-dependent acceptor molecules. The chain is Flavin-dependent halogenase armH2 from Armillaria mellea (Honey mushroom).